The chain runs to 503 residues: ATP synthase subunit alpha, chloroplastic (503 aa).

Residue 170–177 participates in ATP binding; sequence GDRQTGKT.

The protein belongs to the ATPase alpha/beta chains family. In terms of assembly, F-type ATPases have 2 components, CF(1) - the catalytic core - and CF(0) - the membrane proton channel. CF(1) has five subunits: alpha(3), beta(3), gamma(1), delta(1), epsilon(1). CF(0) has four main subunits: a, b, b' and c.

Its subcellular location is the plastid. It is found in the chloroplast thylakoid membrane. It catalyses the reaction ATP + H2O + 4 H(+)(in) = ADP + phosphate + 5 H(+)(out). Produces ATP from ADP in the presence of a proton gradient across the membrane. The alpha chain is a regulatory subunit. The polypeptide is ATP synthase subunit alpha, chloroplastic (Thalassiosira pseudonana (Marine diatom)).